Here is a 732-residue protein sequence, read N- to C-terminus: Lanosterol synthase (732 aa).

An N-acetylthreonine modification is found at T2. PFTB repeat units lie at residues 77–121, 124–165, 424–468, 483–528, 560–600, 612–653, and 670–712; these read ALNG…PLPA, REEI…RILG, PDNP…LLLQ, LCDA…MIDY, LTQG…ACMG, VSRA…HNTC, and QERG…NIFP. Catalysis depends on D455, which acts as the Proton donor.

Belongs to the terpene cyclase/mutase family. In terms of assembly, monomer. As to expression, widely expressed. Expressed in the hair bulb, the outer root sheath and hair matrix of the hair follicle epithelium. Also detected in dermal papilla, epidermis, sweat glands, sebaceous glands, and blood vessels.

It is found in the endoplasmic reticulum membrane. It catalyses the reaction (S)-2,3-epoxysqualene = lanosterol. The protein operates within terpene metabolism; lanosterol biosynthesis; lanosterol from farnesyl diphosphate: step 3/3. Key enzyme in the cholesterol biosynthesis pathway. Catalyzes the cyclization of (S)-2,3 oxidosqualene to lanosterol, a reaction that forms the sterol nucleus. Through the production of lanosterol may regulate lens protein aggregation and increase transparency. This chain is Lanosterol synthase (LSS), found in Homo sapiens (Human).